The chain runs to 957 residues: Glycine dehydrogenase (decarboxylating) (957 aa).

K708 bears the N6-(pyridoxal phosphate)lysine mark.

Belongs to the GcvP family. In terms of assembly, the glycine cleavage system is composed of four proteins: P, T, L and H. It depends on pyridoxal 5'-phosphate as a cofactor.

It carries out the reaction N(6)-[(R)-lipoyl]-L-lysyl-[glycine-cleavage complex H protein] + glycine + H(+) = N(6)-[(R)-S(8)-aminomethyldihydrolipoyl]-L-lysyl-[glycine-cleavage complex H protein] + CO2. Functionally, the glycine cleavage system catalyzes the degradation of glycine. The P protein binds the alpha-amino group of glycine through its pyridoxal phosphate cofactor; CO(2) is released and the remaining methylamine moiety is then transferred to the lipoamide cofactor of the H protein. The chain is Glycine dehydrogenase (decarboxylating) from Shigella boydii serotype 18 (strain CDC 3083-94 / BS512).